The following is a 137-amino-acid chain: Nucleoside diphosphate kinase (137 aa).

6 residues coordinate ATP: K10, F58, R86, T92, R103, and N113. The Pros-phosphohistidine intermediate role is filled by H116.

It belongs to the NDK family. Homotetramer. Requires Mg(2+) as cofactor.

The protein localises to the cytoplasm. The enzyme catalyses a 2'-deoxyribonucleoside 5'-diphosphate + ATP = a 2'-deoxyribonucleoside 5'-triphosphate + ADP. It carries out the reaction a ribonucleoside 5'-diphosphate + ATP = a ribonucleoside 5'-triphosphate + ADP. Functionally, major role in the synthesis of nucleoside triphosphates other than ATP. The ATP gamma phosphate is transferred to the NDP beta phosphate via a ping-pong mechanism, using a phosphorylated active-site intermediate. The chain is Nucleoside diphosphate kinase from Helicobacter pylori (strain P12).